The sequence spans 277 residues: 4-deoxy-L-threo-5-hexosulose-uronate ketol-isomerase (277 aa).

Residues His-195, His-197, Glu-202, and His-244 each contribute to the Zn(2+) site.

The protein belongs to the KduI family. It depends on Zn(2+) as a cofactor.

The enzyme catalyses 5-dehydro-4-deoxy-D-glucuronate = 3-deoxy-D-glycero-2,5-hexodiulosonate. Its pathway is glycan metabolism; pectin degradation; 2-dehydro-3-deoxy-D-gluconate from pectin: step 4/5. Its function is as follows. Catalyzes the isomerization of 5-dehydro-4-deoxy-D-glucuronate to 3-deoxy-D-glycero-2,5-hexodiulosonate. The polypeptide is 4-deoxy-L-threo-5-hexosulose-uronate ketol-isomerase (Oceanobacillus iheyensis (strain DSM 14371 / CIP 107618 / JCM 11309 / KCTC 3954 / HTE831)).